We begin with the raw amino-acid sequence, 267 residues long: Tryptophan synthase alpha chain (267 aa).

Residues E49 and D60 each act as proton acceptor in the active site.

Belongs to the TrpA family. Tetramer of two alpha and two beta chains.

The catalysed reaction is (1S,2R)-1-C-(indol-3-yl)glycerol 3-phosphate + L-serine = D-glyceraldehyde 3-phosphate + L-tryptophan + H2O. Its pathway is amino-acid biosynthesis; L-tryptophan biosynthesis; L-tryptophan from chorismate: step 5/5. The alpha subunit is responsible for the aldol cleavage of indoleglycerol phosphate to indole and glyceraldehyde 3-phosphate. The protein is Tryptophan synthase alpha chain of Chloroflexus aggregans (strain MD-66 / DSM 9485).